Reading from the N-terminus, the 308-residue chain is SAP30-binding protein (308 aa).

The segment at 15–101 is disordered; the sequence is AEDSEPESDG…EAEKRDPQEL (87 aa). Residues 16–26 are compositionally biased toward acidic residues; sequence EDSEPESDGEA. Phosphoserine is present on residues S18, S22, S43, and S52. A compositionally biased stretch (acidic residues) spans 57–78; that stretch reads DEDGYEEEEDENSRQSEDDDSE. Residues 79-99 show a composition bias toward basic and acidic residues; the sequence is TEKPEADDPKDNTEAEKRDPQ. A Glycyl lysine isopeptide (Lys-Gly) (interchain with G-Cter in SUMO2) cross-link involves residue K95. At S113 the chain carries Phosphoserine. Residues K220, K304, and K305 each participate in a glycyl lysine isopeptide (Lys-Gly) (interchain with G-Cter in SUMO2) cross-link.

Belongs to the HCNGP family. As to quaternary structure, interacts with histone deacetylase complex subunit SAP30.

The protein localises to the nucleus. In terms of biological role, plays a role in transcriptional repression by promoting histone deacetylase activity, leading to deacetylation of histone H3. May be involved in the regulation of beta-2-microglobulin genes. (Microbial infection) Involved in transcriptional repression of HHV-1 genes TK and gC. In Homo sapiens (Human), this protein is SAP30-binding protein.